A 183-amino-acid polypeptide reads, in one-letter code: Small ribosomal subunit protein uS4 (183 aa).

Positions Arg-106–His-168 constitute an S4 RNA-binding domain.

This sequence belongs to the universal ribosomal protein uS4 family. In terms of assembly, part of the 30S ribosomal subunit. Contacts protein S5. The interaction surface between S4 and S5 is involved in control of translational fidelity.

One of the primary rRNA binding proteins, it binds directly to 16S rRNA where it nucleates assembly of the body of the 30S subunit. Functionally, with S5 and S12 plays an important role in translational accuracy. This is Small ribosomal subunit protein uS4 from Methanothrix thermoacetophila (strain DSM 6194 / JCM 14653 / NBRC 101360 / PT) (Methanosaeta thermophila).